The primary structure comprises 795 residues: Delta-1-pyrroline-5-carboxylate synthase (795 aa).

The segment at 1–361 (MLSQVYRYGF…FFSEVKPAGP (361 aa)) is glutamate 5-kinase. The substrate site is built by S117, D223, and N246. ATP contacts are provided by residues 266-267 (SD) and 305-311 (MGGMEAK). An N6-succinyllysine mark is found at K311, K347, and K550. Residues 362-795 (TVEQQGEMAR…NLPIPQRNTN (434 aa)) form a gamma-glutamyl phosphate reductase region.

The protein in the N-terminal section; belongs to the glutamate 5-kinase family. In the C-terminal section; belongs to the gamma-glutamyl phosphate reductase family. Can form homodimers/multimers.

It localises to the mitochondrion matrix. It carries out the reaction L-glutamate + ATP = L-glutamyl 5-phosphate + ADP. It catalyses the reaction L-glutamate 5-semialdehyde + phosphate + NADP(+) = L-glutamyl 5-phosphate + NADPH + H(+). It participates in amino-acid biosynthesis; L-proline biosynthesis; L-glutamate 5-semialdehyde from L-glutamate: step 1/2. Its pathway is amino-acid biosynthesis; L-proline biosynthesis; L-glutamate 5-semialdehyde from L-glutamate: step 2/2. Its function is as follows. Bifunctional enzyme that converts glutamate to glutamate 5-semialdehyde, an intermediate in the biosynthesis of proline, ornithine and arginine. The protein is Delta-1-pyrroline-5-carboxylate synthase (ALDH18A1) of Pongo abelii (Sumatran orangutan).